The primary structure comprises 207 residues: Intraflagellar transport protein 43 homolog A (207 aa).

Positions 1-104 are disordered; it reads MDDNLQLGDS…GSDDEGDIPV (104 aa).

Belongs to the IFT43 family. In terms of assembly, component of IFT complex A.

In terms of biological role, component of IFT complex A (IFT-A) involved in retrograde ciliary transport along microtubules from the ciliary tip to the base. The protein is Intraflagellar transport protein 43 homolog A (ift43a) of Salmo salar (Atlantic salmon).